Here is a 382-residue protein sequence, read N- to C-terminus: Anhydro-N-acetylmuramic acid kinase (382 aa).

9-16 contacts ATP; that stretch reads GTSLDGID.

This sequence belongs to the anhydro-N-acetylmuramic acid kinase family.

The enzyme catalyses 1,6-anhydro-N-acetyl-beta-muramate + ATP + H2O = N-acetyl-D-muramate 6-phosphate + ADP + H(+). It participates in amino-sugar metabolism; 1,6-anhydro-N-acetylmuramate degradation. Its pathway is cell wall biogenesis; peptidoglycan recycling. Functionally, catalyzes the specific phosphorylation of 1,6-anhydro-N-acetylmuramic acid (anhMurNAc) with the simultaneous cleavage of the 1,6-anhydro ring, generating MurNAc-6-P. Is required for the utilization of anhMurNAc either imported from the medium or derived from its own cell wall murein, and thus plays a role in cell wall recycling. The sequence is that of Anhydro-N-acetylmuramic acid kinase from Bacillus thuringiensis subsp. konkukian (strain 97-27).